A 217-amino-acid polypeptide reads, in one-letter code: N-(5'-phosphoribosyl)anthranilate isomerase (217 aa).

Belongs to the TrpF family.

The catalysed reaction is N-(5-phospho-beta-D-ribosyl)anthranilate = 1-(2-carboxyphenylamino)-1-deoxy-D-ribulose 5-phosphate. It participates in amino-acid biosynthesis; L-tryptophan biosynthesis; L-tryptophan from chorismate: step 3/5. The chain is N-(5'-phosphoribosyl)anthranilate isomerase from Acaryochloris marina (strain MBIC 11017).